A 735-amino-acid chain; its full sequence is MASPLRFDGRVVLVTGAGGGLGRAYALAFAERGALVVVNDLGGDFKGVGKGSSAADKVVEEIRRRGGKAVANYDSVEAGEKLVKTALDTFGRIDVVVNNAGILRDRSFSRISDEDWDIIQRVHLRGSFQVTRAAWDHMKKQNYGRIIMTASASGIYGNFGQANYSAAKLGLLGLANTLVIEGRKNNIHCNTIAPNAGSRMTETVMPEDLVEALKPEYVAPLVLWLCHESCEENGGLFEVGAGWIGKLRWERTLGAIVRKRNQPMTPEAVRDNWVKICDFSNASKPKSIQESTGGIIEVLHKIDSEGISQNHTGQVASADASGFAGVVGHKLPSFSSSYTELQCIMYALGVGASVKNPKDLKFVYEGSADFSCLPTFGVIVAQKSLMSGGLAEVPGLSINFAKVLHGEQYLELYKPLPRSGELKCEAVIADILDKGSGIVIVMDVYSYSGKELICYNQFSVFVVGSGGFGGKRTSEKLKAAVAVPSRPPDAVLRDTTSLNQAALYRLSGDSNPLHIDPSFASIAGFEKPILHGLCTFGFSARHVLQQFADNDVSRFKAIKVRFAKPVYPGQTLQTEMWKEGNRIHFQTKVQETGDIVISNAYVDLVPTSGVSAQTPSEGGALQSALVFGEIGRRLKDVGREVVKKVNAVFEWHITKNGNVAAKWTIDLKNGSGEVYQGPAKGSADTTITISDEDFMEVVLGKLNPQNAFFSGRLKARGNIMLSQKLQMILKDYAKL.

The segment at 1 to 305 is (3R)-hydroxyacyl-CoA dehydrogenase; the sequence is MASPLRFDGR…IEVLHKIDSE (305 aa). NAD(+) is bound by residues 16–40, L21, and D40; that span reads GAGGGLGRAYALAFAERGALVVVND. K46 carries the N6-acetyllysine; alternate modification. K46 is modified (N6-succinyllysine; alternate). S52 bears the Phosphoserine mark. N6-succinyllysine occurs at positions 57 and 68. Position 75–76 (75–76) interacts with NAD(+); it reads SV. K84 carries the N6-succinyllysine modification. N99 is a binding site for NAD(+). Position 151 (S151) interacts with substrate. Y164 serves as the catalytic Proton acceptor. NAD(+) contacts are provided by residues 164 to 168 and 196 to 199; these read YSAAK and AGSR. A Phosphothreonine modification is found at T265. K275 is modified (N6-succinyllysine). Phosphoserine occurs at positions 304 and 308. The interval 321-621 is enoyl-CoA hydratase 2; the sequence is SGFAGVVGHK…AQTPSEGGAL (301 aa). Residue K355 is modified to N6-succinyllysine. (3R)-3-hydroxydecanoyl-CoA is bound at residue 405 to 406; it reads HG. N6-succinyllysine is present on K423. Residues K434, 509 to 514, G532, and F562 contribute to the (3R)-3-hydroxydecanoyl-CoA site; that span reads DSNPLH. In terms of domain architecture, MaoC-like spans 483-599; that stretch reads VPSRPPDAVL…QETGDIVISN (117 aa). Residue K564 is modified to N6-acetyllysine. An N6-succinyllysine mark is found at K578 and K662. Positions 623–735 constitute an SCP2 domain; that stretch reads SALVFGEIGR…QMILKDYAKL (113 aa). N6-acetyllysine is present on K668. Q705 and Q723 together coordinate substrate. Position 724 is an N6-succinyllysine (K724). Residues 733–735 carry the Microbody targeting signal motif; the sequence is AKL.

It belongs to the short-chain dehydrogenases/reductases (SDR) family. In terms of assembly, homodimer.

The protein resides in the peroxisome. It carries out the reaction a (3R)-3-hydroxyacyl-CoA + NAD(+) = a 3-oxoacyl-CoA + NADH + H(+). The catalysed reaction is (24R,25R)-3alpha,7alpha,12alpha,24-tetrahydroxy-5beta-cholestan-26-oyl-CoA = (24E)-3alpha,7alpha,12alpha-trihydroxy-5beta-cholest-24-en-26-oyl-CoA + H2O. The enzyme catalyses a (3R)-3-hydroxyacyl-CoA = a (2E)-enoyl-CoA + H2O. It catalyses the reaction (2E)-octenoyl-CoA + H2O = (3R)-hydroxyoctanoyl-CoA. It carries out the reaction (3R)-hydroxyoctanoyl-CoA + NAD(+) = 3-oxooctanoyl-CoA + NADH + H(+). The catalysed reaction is (3R)-hydroxyhexadecanoyl-CoA + NAD(+) = 3-oxohexadecanoyl-CoA + NADH + H(+). The enzyme catalyses (2E)-hexadecenedioyl-CoA + H2O = (3R)-hydroxyhexadecanedioyl-CoA. It catalyses the reaction (3R)-hydroxyhexadecanedioyl-CoA + NAD(+) = 3-oxohexadecanedioyl-CoA + NADH + H(+). It carries out the reaction (3R)-hydroxyhexadecanoyl-CoA = (2E)-hexadecenoyl-CoA + H2O. The catalysed reaction is (3R)-3-hydroxydecanoyl-CoA = (2E)-decenoyl-CoA + H2O. The enzyme catalyses (3R)-3-hydroxydecanoyl-CoA + NAD(+) = 3-oxodecanoyl-CoA + NADH + H(+). It catalyses the reaction (24R,25R)-3alpha,7alpha,12alpha,24-tetrahydroxy-5beta-cholestan-26-oyl-CoA + NAD(+) = 3alpha,7alpha,12alpha-trihydroxy-24-oxo-5beta-cholestan-26-oyl-CoA + NADH + H(+). The protein operates within lipid metabolism; fatty acid beta-oxidation. Bifunctional enzyme acting on the peroxisomal fatty acid beta-oxidation pathway. Catalyzes two of the four reactions in fatty acid degradation: hydration of 2-enoyl-CoA (trans-2-enoyl-CoA) to produce (3R)-3-hydroxyacyl-CoA, and dehydrogenation of (3R)-3-hydroxyacyl-CoA to produce 3-ketoacyl-CoA (3-oxoacyl-CoA), which is further metabolized by SCPx. Can use straight-chain and branched-chain fatty acids, as well as bile acid intermediates as substrates. The protein is Peroxisomal multifunctional enzyme type 2 of Rattus norvegicus (Rat).